A 437-amino-acid polypeptide reads, in one-letter code: UDP-N-acetylmuramate--L-alanine ligase (437 aa).

108 to 114 (GAHGKTS) provides a ligand contact to ATP.

It belongs to the MurCDEF family.

Its subcellular location is the cytoplasm. The catalysed reaction is UDP-N-acetyl-alpha-D-muramate + L-alanine + ATP = UDP-N-acetyl-alpha-D-muramoyl-L-alanine + ADP + phosphate + H(+). It functions in the pathway cell wall biogenesis; peptidoglycan biosynthesis. In terms of biological role, cell wall formation. In Staphylococcus carnosus (strain TM300), this protein is UDP-N-acetylmuramate--L-alanine ligase.